The chain runs to 707 residues: Elongation factor G (707 aa).

In terms of domain architecture, tr-type G spans 8 to 290; the sequence is ERYRNIGICA…AVIEYLPSPT (283 aa). Residues 17 to 24, 88 to 92, and 142 to 145 each bind GTP; these read AHVDAGKT, DTPGH, and NKMD.

Belongs to the TRAFAC class translation factor GTPase superfamily. Classic translation factor GTPase family. EF-G/EF-2 subfamily.

It localises to the cytoplasm. Its function is as follows. Catalyzes the GTP-dependent ribosomal translocation step during translation elongation. During this step, the ribosome changes from the pre-translocational (PRE) to the post-translocational (POST) state as the newly formed A-site-bound peptidyl-tRNA and P-site-bound deacylated tRNA move to the P and E sites, respectively. Catalyzes the coordinated movement of the two tRNA molecules, the mRNA and conformational changes in the ribosome. The protein is Elongation factor G of Idiomarina loihiensis (strain ATCC BAA-735 / DSM 15497 / L2-TR).